Consider the following 629-residue polypeptide: tRNA uridine 5-carboxymethylaminomethyl modification enzyme MnmG (629 aa).

FAD contacts are provided by residues 13–18 (GGGHAG), Val-125, and Ser-180. 273–287 (GPRYCPSIEDKVMRF) contributes to the NAD(+) binding site. Gln-370 contributes to the FAD binding site.

This sequence belongs to the MnmG family. Homodimer. Heterotetramer of two MnmE and two MnmG subunits. Requires FAD as cofactor.

The protein localises to the cytoplasm. In terms of biological role, NAD-binding protein involved in the addition of a carboxymethylaminomethyl (cmnm) group at the wobble position (U34) of certain tRNAs, forming tRNA-cmnm(5)s(2)U34. This Sodalis glossinidius (strain morsitans) protein is tRNA uridine 5-carboxymethylaminomethyl modification enzyme MnmG.